We begin with the raw amino-acid sequence, 122 residues long: Small ribosomal subunit protein uS13 (122 aa).

Residues 95 to 122 form a disordered region; sequence GLPVHGQRTHTNARTRKGPRKGAVGKKK.

This sequence belongs to the universal ribosomal protein uS13 family. As to quaternary structure, part of the 30S ribosomal subunit. Forms a loose heterodimer with protein S19. Forms two bridges to the 50S subunit in the 70S ribosome.

Functionally, located at the top of the head of the 30S subunit, it contacts several helices of the 16S rRNA. In the 70S ribosome it contacts the 23S rRNA (bridge B1a) and protein L5 of the 50S subunit (bridge B1b), connecting the 2 subunits; these bridges are implicated in subunit movement. Contacts the tRNAs in the A and P-sites. This Lawsonia intracellularis (strain PHE/MN1-00) protein is Small ribosomal subunit protein uS13.